The following is a 236-amino-acid chain: WUSCHEL-related homeobox 4 (236 aa).

The segment at residues alanine 88–glutamine 152 is a DNA-binding region (homeobox; WUS-type). The tract at residues proline 169–aspartate 188 is disordered. A compositionally biased stretch (basic and acidic residues) spans glutamate 174–glutamate 187.

It belongs to the WUS homeobox family.

Its subcellular location is the nucleus. In terms of biological role, transcription factor which may be involved in developmental processes. The sequence is that of WUSCHEL-related homeobox 4 (WOX4) from Oryza sativa subsp. indica (Rice).